Consider the following 134-residue polypeptide: Large ribosomal subunit protein eL32 (134 aa).

Belongs to the eukaryotic ribosomal protein eL32 family.

In Drosophila acanthoptera (Fruit fly), this protein is Large ribosomal subunit protein eL32 (RpL32).